We begin with the raw amino-acid sequence, 804 residues long: Leucine--tRNA ligase (804 aa).

Residues 40 to 51 (PYPSGAGLHVGH) carry the 'HIGH' region motif. The 'KMSKS' region motif lies at 576 to 580 (KMSKS). ATP is bound at residue Lys-579.

The protein belongs to the class-I aminoacyl-tRNA synthetase family.

It is found in the cytoplasm. The catalysed reaction is tRNA(Leu) + L-leucine + ATP = L-leucyl-tRNA(Leu) + AMP + diphosphate. In Staphylococcus aureus (strain Mu3 / ATCC 700698), this protein is Leucine--tRNA ligase.